A 674-amino-acid polypeptide reads, in one-letter code: DNA ligase (674 aa).

NAD(+) is bound by residues 35–39 (DFEFD), 84–85 (SL), and E118. The active-site N6-AMP-lysine intermediate is K120. NAD(+) is bound by residues R141, E184, K297, and K321. Residues C415, C418, C433, and C439 each coordinate Zn(2+). The BRCT domain maps to 598–674 (QVNRNFEGVT…VSEDEFEAML (77 aa)).

Belongs to the NAD-dependent DNA ligase family. LigA subfamily. Mg(2+) serves as cofactor. Requires Mn(2+) as cofactor.

It carries out the reaction NAD(+) + (deoxyribonucleotide)n-3'-hydroxyl + 5'-phospho-(deoxyribonucleotide)m = (deoxyribonucleotide)n+m + AMP + beta-nicotinamide D-nucleotide.. In terms of biological role, DNA ligase that catalyzes the formation of phosphodiester linkages between 5'-phosphoryl and 3'-hydroxyl groups in double-stranded DNA using NAD as a coenzyme and as the energy source for the reaction. It is essential for DNA replication and repair of damaged DNA. This Pelodictyon phaeoclathratiforme (strain DSM 5477 / BU-1) protein is DNA ligase.